We begin with the raw amino-acid sequence, 220 residues long: StAR-related lipid transfer protein 6 (220 aa).

The START domain maps to 1–208 (MDFKAIAQQT…AKDGIKAHRT (208 aa)).

Functionally, may be involved in the intracellular transport of sterols or other lipids. May bind cholesterol or other sterols. This is StAR-related lipid transfer protein 6 (STARD6) from Homo sapiens (Human).